Reading from the N-terminus, the 222-residue chain is Large ribosomal subunit protein uL1 (222 aa).

This sequence belongs to the universal ribosomal protein uL1 family. In terms of assembly, part of the 50S ribosomal subunit.

In terms of biological role, binds directly to 23S rRNA. Probably involved in E site tRNA release. Functionally, protein L1 is also a translational repressor protein, it controls the translation of its operon by binding to its mRNA. This Pyrobaculum aerophilum (strain ATCC 51768 / DSM 7523 / JCM 9630 / CIP 104966 / NBRC 100827 / IM2) protein is Large ribosomal subunit protein uL1.